The sequence spans 200 residues: Matrix protein (200 aa).

In terms of assembly, homomultimer. Interacts with viral nucleocapsid.

The protein resides in the virion membrane. It localises to the host endomembrane system. Its subcellular location is the host nucleus membrane. Functionally, plays a major role in assembly and budding of virion, by recruiting cellular partners of the ESCRT complexes that play a key role in releasing the budding particle from the host membrane. Condensates the ribonucleocapsid core during virus assembly. This chain is Matrix protein (M), found in Tupaia (TUPV).